A 217-amino-acid chain; its full sequence is Glutathione S-transferase B (217 aa).

A GST N-terminal domain is found at 1-87 (PMTLGYWNIR…YIARKHNLCG (87 aa)). Glutathione-binding positions include 6 to 7 (YW), 45 to 49 (WLNEK), 58 to 59 (NL), and 71 to 72 (QS). One can recognise a GST C-terminal domain in the interval 89–207 (TEEETIRMDI…KSSRFLPKPL (119 aa)). Residue Y115 participates in substrate binding.

The protein belongs to the GST superfamily. Mu family. In terms of assembly, homodimer.

The protein resides in the cytoplasm. It carries out the reaction RX + glutathione = an S-substituted glutathione + a halide anion + H(+). The enzyme catalyses prostaglandin A2 + glutathione = prostaglandin A2-S-(R)-glutathione. It catalyses the reaction prostaglandin J2 + glutathione = prostaglandin J2-S-(R)-glutathione. The catalysed reaction is prostaglandin J2 + glutathione = prostaglandin J2-S-(S)-glutathione. It carries out the reaction prostaglandin A2 + glutathione = prostaglandin A2-S-(S)-glutathione. The enzyme catalyses 11(S)-hydroxy-14(S),15(S)-epoxy-(5Z,8Z,12E)-eicosatrienoate + glutathione = (11S,15S)-dihydroxy-14(R)-S-glutathionyl-(5Z,8Z,12E)-eicosatrienoate. Conjugation of reduced glutathione to a wide number of exogenous and endogenous hydrophobic electrophiles. Involved in the formation of glutathione conjugates of both prostaglandin A2 (PGA2) and prostaglandin J2 (PGJ2). Participates in the formation of novel hepoxilin regioisomers. The sequence is that of Glutathione S-transferase B (GSTM1) from Cavia porcellus (Guinea pig).